The primary structure comprises 262 residues: Pyridoxine 5'-phosphate synthase (262 aa).

A 3-amino-2-oxopropyl phosphate-binding site is contributed by Asn6. A 1-deoxy-D-xylulose 5-phosphate-binding site is contributed by Asp8–His9. Arg17 lines the 3-amino-2-oxopropyl phosphate pocket. His43 serves as the catalytic Proton acceptor. 1-deoxy-D-xylulose 5-phosphate contacts are provided by Arg45 and His50. Residue Glu70 is the Proton acceptor of the active site. Thr102 lines the 1-deoxy-D-xylulose 5-phosphate pocket. His215 serves as the catalytic Proton donor. Residues Gly216 and Gly237–His238 each bind 3-amino-2-oxopropyl phosphate.

The protein belongs to the PNP synthase family. In terms of assembly, homooctamer; tetramer of dimers.

It localises to the cytoplasm. The catalysed reaction is 3-amino-2-oxopropyl phosphate + 1-deoxy-D-xylulose 5-phosphate = pyridoxine 5'-phosphate + phosphate + 2 H2O + H(+). It functions in the pathway cofactor biosynthesis; pyridoxine 5'-phosphate biosynthesis; pyridoxine 5'-phosphate from D-erythrose 4-phosphate: step 5/5. Its function is as follows. Catalyzes the complicated ring closure reaction between the two acyclic compounds 1-deoxy-D-xylulose-5-phosphate (DXP) and 3-amino-2-oxopropyl phosphate (1-amino-acetone-3-phosphate or AAP) to form pyridoxine 5'-phosphate (PNP) and inorganic phosphate. This chain is Pyridoxine 5'-phosphate synthase, found in Helicobacter pylori (strain G27).